The following is a 58-amino-acid chain: Proteinase inhibitor PSKP-2 (58 aa).

The Kazal-like domain maps to 1–58 (VIEPDCKKYEGKKCPPDIALVCGTNGREYYNECALCVFIRDSTLKADKAIKIKKWGKC). Intrachain disulfides connect Cys-6–Cys-36, Cys-14–Cys-33, and Cys-22–Cys-58.

In terms of tissue distribution, skin.

Its subcellular location is the secreted. May have a role in mucosal defense against microbes by interacting directly with their membranes. The protein is Proteinase inhibitor PSKP-2 of Phyllomedusa sauvagei (Sauvage's leaf frog).